Here is a 202-residue protein sequence, read N- to C-terminus: Potassium-transporting ATPase KdpC subunit 1 (202 aa).

The helical transmembrane segment at 17–37 (LWVIAAVIYPFFMIAVGQIVF) threads the bilayer.

It belongs to the KdpC family. The system is composed of three essential subunits: KdpA, KdpB and KdpC.

The protein resides in the cell inner membrane. Its function is as follows. Part of the high-affinity ATP-driven potassium transport (or Kdp) system, which catalyzes the hydrolysis of ATP coupled with the electrogenic transport of potassium into the cytoplasm. This subunit acts as a catalytic chaperone that increases the ATP-binding affinity of the ATP-hydrolyzing subunit KdpB by the formation of a transient KdpB/KdpC/ATP ternary complex. The chain is Potassium-transporting ATPase KdpC subunit 1 from Nostoc sp. (strain PCC 7120 / SAG 25.82 / UTEX 2576).